Consider the following 586-residue polypeptide: Madf and zinc finger protein 1 (586 aa).

The involved in interaction with Cp190 stretch occupies residues 161 to 194; that stretch reads FMSEDDLAPPRKPGRPPRRTRPGQVFKFKVSFIR. A DNA-binding region (MADF 1) is located at residues 201–292; it reads HLIQAYKEHP…KCEFLSVAPV (92 aa). Residues 294–319 form an involved in interaction with Cp190 region; that stretch reads TPRENEEDNDLTAIKLNFKEENLITT. Positions 320–413 form a DNA-binding region, MADF 2; that stretch reads SFIETYANYP…MCSFLPAKGS (94 aa). 6 consecutive C2H2-type zinc fingers follow at residues 418 to 441, 448 to 471, 476 to 498, 504 to 527, 533 to 555, and 561 to 583; these read LYCD…VKAH, YLCS…LRSH, LKCQ…TLIH, HVCD…NGVH, YSCN…IKGH, and KKCE…RRSH.

As to quaternary structure, interacts (via regions flanking MADF domain 1) with Cp190 (via regions between the BTB domain and first zinc finger domain); the interaction is probably direct and is essential for protein function.

The protein resides in the nucleus. It localises to the chromosome. Its subcellular location is the nucleoplasm. Chromatin-binding protein involved in the organization of active promoters and insulators. Essential for the activity of heterochromatin promoters; primarily binds to specific motifs within promoters of housekeeping genes. May also associate to a lesser extent with promoters in euchromatin. Mediates recruitment of Cp190, a multifunctional protein involved in the recruitment of transcription complexes, the creation of open chromatin regions and the activity of insulators. Cooperates with pita and su(Hw) to recruit Cp190 and regulate insulator function at the front-ultraabdominal (Fub) boundary. May cooperate with other C2H2 zinc finger proteins, such as M1BP, to recruit CP190 to promoters. May be involved in cellular organization and development of the eye. This is Madf and zinc finger protein 1 from Drosophila melanogaster (Fruit fly).